Here is a 258-residue protein sequence, read N- to C-terminus: UPF0328 protein ECU07_0060 (258 aa).

This sequence belongs to the UPF0328 family.

In Encephalitozoon cuniculi (strain GB-M1) (Microsporidian parasite), this protein is UPF0328 protein ECU07_0060.